The chain runs to 130 residues: Protein ApaG (130 aa).

In terms of domain architecture, ApaG spans Ser-3–Ser-127.

This Rhodospirillum centenum (strain ATCC 51521 / SW) protein is Protein ApaG.